We begin with the raw amino-acid sequence, 643 residues long: Enzymatic polyprotein (643 aa).

In terms of domain architecture, Peptidase A3A spans 6–209 (NPNATFITVK…KEVNVPNNIP (204 aa)). Asp26 functions as the For protease activity in the catalytic mechanism. The Reverse transcriptase domain maps to 226–410 (VRKGIIEESK…QTIDFLGLTL (185 aa)). Asp296, Asp360, and Asp361 together coordinate Mg(2+).

This sequence belongs to the caulimoviridae enzymatic polyprotein family.

The catalysed reaction is DNA(n) + a 2'-deoxyribonucleoside 5'-triphosphate = DNA(n+1) + diphosphate. Encodes for at least two polypeptides: protease (PR) and reverse transcriptase (RT). The protease processes the polyprotein in cis. Reverse transcriptase is multifunctional enzyme that converts the viral RNA genome into dsDNA in viral cytoplasmic capsids. This enzyme displays a DNA polymerase activity that can copy either DNA or RNA templates, and a ribonuclease H (RNase H) activity that cleaves the RNA strand of RNA-DNA heteroduplexes in a partially processive 3'- to 5'-endonucleasic mode. Neo-synthesized pregenomic RNA (pgRNA) are encapsidated, and reverse-transcribed inside the nucleocapsid. Partial (+)DNA is synthesized from the (-)DNA template and generates the relaxed circular DNA (RC-DNA) genome. After budding and infection, the RC-DNA migrates in the nucleus, and is converted into a plasmid-like covalently closed circular DNA (cccDNA). The chain is Enzymatic polyprotein from Cestrum parqui (CmYLCV).